We begin with the raw amino-acid sequence, 488 residues long: Prostaglandin E2 receptor EP4 subtype (488 aa).

Over 1-19 (MSTPVANASASSMPELLNN) the chain is Extracellular. N-linked (GlcNAc...) asparagine glycosylation is present at Asn-7. The chain crosses the membrane as a helical span at residues 20-43 (PVTIPAVMFIFGVVGNLVAIVVLC). Residues 44–55 (KSRKEQKETTFY) are Cytoplasmic-facing. The chain crosses the membrane as a helical span at residues 56–79 (TLVCGLAVTDLLGTLLVSPVTIAT). Topologically, residues 80–96 (YMKGQWPGGQALCDYST) are extracellular. A disulfide bridge links Cys-92 with Cys-170. A helical membrane pass occupies residues 97-115 (FILLFFGLSGLSIICAMSI). Topologically, residues 116 to 135 (ERYLAINHAYFYSHYVDKRL) are cytoplasmic. The chain crosses the membrane as a helical span at residues 136–160 (AGLTLFAVYASNVLFCALPNMGLGR). The Extracellular portion of the chain corresponds to 161 to 184 (SRLQFPDTWCFIDWRTNVTAHAAF). The N-linked (GlcNAc...) asparagine glycan is linked to Asn-177. A helical transmembrane segment spans residues 185-211 (SYMYAGFSSFLILATVLCNVLVCGALL). Over 212–270 (RMHRQFMRRTSLGTEQHHAAAAAAVTSAACRGHPTASPALPRLSDFRRRRSFRRIAGAE) the chain is Cytoplasmic. The helical transmembrane segment at 271–298 (IQMVILLIATSLVVLICSIPLVVRVFIN) threads the bilayer. At 299-315 (QLYQPDLVREISQNPDL) the chain is on the extracellular side. The helical transmembrane segment at 316 to 335 (QAIRIASVNPILDPWIYILL) threads the bilayer. Over 336-488 (RKTVLSKAIE…ETLNLSEKCI (153 aa)) the chain is Cytoplasmic. Over residues 358–371 (RRDRSGQHCSDSRR) the composition is skewed to basic and acidic residues. The interval 358–381 (RRDRSGQHCSDSRRTSSAMSTHSR) is disordered. The span at 372–381 (TSSAMSTHSR) shows a compositional bias: polar residues. Phosphoserine is present on residues Ser-377, Ser-380, Ser-382, and Ser-385. A disordered region spans residues 456–475 (EVGGGGRAGPTPKGSSLQVT).

The protein belongs to the G-protein coupled receptor 1 family. As to quaternary structure, interacts with FEM1A. In terms of processing, phosphorylation mediates agonist-mediated desensitization by promoting cytoplasmic retention. In terms of tissue distribution, highly expressed in intestine, duodenal epithelium, uterus, thymus and adrenal cortex. Lower but significant expression in whole adrenal, lung, spleen, stomach, and kidney. In this latter organ, the receptor is localized in the glomeruli and the transitional epithelium of the renal calyx.

The protein localises to the cell membrane. Its function is as follows. Receptor for prostaglandin E2 (PGE2). The activity of this receptor is mediated by G(s) proteins that stimulate adenylate cyclase. Has a relaxing effect on smooth muscle. May play an important role in regulating renal hemodynamics, intestinal epithelial transport, adrenal aldosterone secretion, and uterine function. The chain is Prostaglandin E2 receptor EP4 subtype (PTGER4) from Oryctolagus cuniculus (Rabbit).